The following is a 404-amino-acid chain: Tryptophan synthase beta chain (404 aa).

Lysine 99 carries the N6-(pyridoxal phosphate)lysine modification.

Belongs to the TrpB family. Tetramer of two alpha and two beta chains. The cofactor is pyridoxal 5'-phosphate.

It catalyses the reaction (1S,2R)-1-C-(indol-3-yl)glycerol 3-phosphate + L-serine = D-glyceraldehyde 3-phosphate + L-tryptophan + H2O. It functions in the pathway amino-acid biosynthesis; L-tryptophan biosynthesis; L-tryptophan from chorismate: step 5/5. In terms of biological role, the beta subunit is responsible for the synthesis of L-tryptophan from indole and L-serine. This chain is Tryptophan synthase beta chain, found in Rhizobium rhizogenes (strain K84 / ATCC BAA-868) (Agrobacterium radiobacter).